A 501-amino-acid polypeptide reads, in one-letter code: Lysine--tRNA ligase (501 aa).

The Mg(2+) site is built by E402 and E409.

It belongs to the class-II aminoacyl-tRNA synthetase family. Homodimer. Mg(2+) serves as cofactor.

Its subcellular location is the cytoplasm. It catalyses the reaction tRNA(Lys) + L-lysine + ATP = L-lysyl-tRNA(Lys) + AMP + diphosphate. The polypeptide is Lysine--tRNA ligase (Helicobacter pylori (strain G27)).